Here is a 638-residue protein sequence, read N- to C-terminus: Threonine--tRNA ligase (638 aa).

Residues 1-61 (MPVITLPDGS…SVDGKLQIIT (61 aa)) enclose the TGS domain. The catalytic stretch occupies residues 243-534 (DHRKIGKTQD…LTEEYAGFFP (292 aa)). Positions 334, 385, and 511 each coordinate Zn(2+).

The protein belongs to the class-II aminoacyl-tRNA synthetase family. In terms of assembly, homodimer. Zn(2+) is required as a cofactor.

The protein resides in the cytoplasm. It catalyses the reaction tRNA(Thr) + L-threonine + ATP = L-threonyl-tRNA(Thr) + AMP + diphosphate + H(+). Catalyzes the attachment of threonine to tRNA(Thr) in a two-step reaction: L-threonine is first activated by ATP to form Thr-AMP and then transferred to the acceptor end of tRNA(Thr). Also edits incorrectly charged L-seryl-tRNA(Thr). The polypeptide is Threonine--tRNA ligase (Hamiltonella defensa subsp. Acyrthosiphon pisum (strain 5AT)).